Reading from the N-terminus, the 66-residue chain is Small ribosomal subunit protein bS21 (66 aa).

The disordered stretch occupies residues 47–66 (KAQEAARRKRKFARKRMYED). The segment covering 53-66 (RRKRKFARKRMYED) has biased composition (basic residues).

Belongs to the bacterial ribosomal protein bS21 family.

The polypeptide is Small ribosomal subunit protein bS21 (Rickettsia bellii (strain RML369-C)).